Reading from the N-terminus, the 302-residue chain is 2-phosphoglycerate kinase (302 aa).

In terms of domain architecture, ATP-cone spans 2 to 89 (IKVIERDGKV…FWRRFRKLKI (88 aa)).

Belongs to the 2-phosphoglycerate kinase family. A divalent metal cation serves as cofactor.

The enzyme catalyses (2R)-2-phosphoglycerate + ATP = (2R)-2,3-bisphosphoglycerate + ADP + H(+). It functions in the pathway thermoadapter biosynthesis; cyclic 2,3-diphosphoglycerate biosynthesis; cyclic 2,3-diphosphoglycerate from 2-phospho-D-glycerate: step 1/2. In terms of biological role, catalyzes the phosphorylation of 2-phosphoglycerate to 2,3-diphosphoglycerate. Involved in the biosynthesis of cyclic 2,3-bisphosphoglycerate, a thermoprotectant. This chain is 2-phosphoglycerate kinase, found in Pyrococcus furiosus (strain ATCC 43587 / DSM 3638 / JCM 8422 / Vc1).